The sequence spans 546 residues: Mercuric reductase (546 aa).

In terms of domain architecture, HMA spans 2 to 66 (NKFKVNISGM…AIDEANYQAG (65 aa)). A metal cation is bound by residues cysteine 13 and cysteine 16. FAD is bound by residues alanine 96, glycine 116, and threonine 121. Cysteines 122 and 127 form a disulfide. FAD-binding residues include lysine 131 and alanine 195. NAD(+) is bound by residues 256-263 (GSGYIGME) and glycine 346. 2 residues coordinate FAD: aspartate 387 and valine 395. Residues cysteine 543 and cysteine 544 each coordinate Hg(2+).

The protein belongs to the class-I pyridine nucleotide-disulfide oxidoreductase family. As to quaternary structure, homodimer. FAD serves as cofactor.

It catalyses the reaction Hg + NADP(+) + H(+) = Hg(2+) + NADPH. With respect to regulation, uses NADPH as the preferred electron donor, but shows slight activity with NADH as well. Inhibited by Cu(2+), Cd(2+), Zn(2+) and Co(2+), with Cu(2+) showing the strongest inhibition. Enzyme activity is enhanced by b-mercaptoethanol and NaCl up to concentrations of 500 uM and 100 mM respectively, followed by inhibition at higher concentrations. Resistance to Hg(2+) in bacteria appears to be governed by a specialized system which includes mercuric reductase. MerA protein is responsible for volatilizing mercury as Hg(0). Catalyzes reduction of Hg(2+) to elemental Hg, which is volatile and can diffuse out of cells passively. Plays a pivotal role in mercury resistance and cell protection. This chain is Mercuric reductase, found in Lysinibacillus sphaericus (Bacillus sphaericus).